The primary structure comprises 92 residues: Small ribosomal subunit protein uS19 (92 aa).

This sequence belongs to the universal ribosomal protein uS19 family.

Functionally, protein S19 forms a complex with S13 that binds strongly to the 16S ribosomal RNA. The chain is Small ribosomal subunit protein uS19 from Granulibacter bethesdensis (strain ATCC BAA-1260 / CGDNIH1).